The primary structure comprises 85 residues: Three-finger toxin MALT0044C (85 aa).

Residues 1–21 form the signal peptide; it reads MKTLLLTLVVVTIVCLDLGNT. 4 disulfides stabilise this stretch: Cys24–Cys45, Cys38–Cys63, Cys67–Cys78, and Cys79–Cys84.

The protein belongs to the three-finger toxin family. Short-chain subfamily. As to expression, expressed by the venom gland.

It localises to the secreted. The polypeptide is Three-finger toxin MALT0044C (Micrurus altirostris (Uruguayan coral snake)).